The following is a 148-amino-acid chain: Large ribosomal subunit protein uL15 (148 aa).

Residues 14 to 54 (HRKKRVGCGEGGGHGKTSGRGGKGQTARSGSSIRPGFEGGQ) are disordered. A compositionally biased stretch (gly residues) spans 21–37 (CGEGGGHGKTSGRGGKG).

Belongs to the universal ribosomal protein uL15 family. In terms of assembly, part of the 50S ribosomal subunit.

In terms of biological role, binds to the 23S rRNA. This is Large ribosomal subunit protein uL15 from Opitutus terrae (strain DSM 11246 / JCM 15787 / PB90-1).